The chain runs to 299 residues: GTPase Era (299 aa).

The region spanning 4-171 (KSGFVAILGR…IKLLTDNLEE (168 aa)) is the Era-type G domain. Positions 12–19 (GRPNVGKS) are G1. 12–19 (GRPNVGKS) contacts GTP. The interval 38-42 (QTTRN) is G2. The segment at 59–62 (DTPG) is G3. Residues 59–63 (DTPGI) and 121–124 (NKID) contribute to the GTP site. Positions 121 to 124 (NKID) are G4. The segment at 150–152 (ISA) is G5. In terms of domain architecture, KH type-2 spans 202–280 (TQQEVPHSVA…YLETWVKVKK (79 aa)).

Belongs to the TRAFAC class TrmE-Era-EngA-EngB-Septin-like GTPase superfamily. Era GTPase family. Monomer.

The protein resides in the cytoplasm. Its subcellular location is the cell membrane. Functionally, an essential GTPase that binds both GDP and GTP, with rapid nucleotide exchange. Plays a role in 16S rRNA processing and 30S ribosomal subunit biogenesis and possibly also in cell cycle regulation and energy metabolism. This chain is GTPase Era, found in Streptococcus agalactiae serotype III (strain NEM316).